Reading from the N-terminus, the 591-residue chain is Probable sulfoacetaldehyde acetyltransferase (591 aa).

Residues 359–383 are disordered; the sequence is MDHEDDDPGTEWNVGARQREPDRMS.

Belongs to the TPP enzyme family. Requires Mg(2+) as cofactor. Thiamine diphosphate is required as a cofactor.

It is found in the cytoplasm. The catalysed reaction is acetyl phosphate + sulfite + H(+) = sulfoacetaldehyde + phosphate. Its pathway is organosulfur degradation; taurine degradation via aerobic pathway; acetyl phosphate and sulfite from taurine: step 2/2. This chain is Probable sulfoacetaldehyde acetyltransferase (xsc), found in Rhizobium meliloti (strain 1021) (Ensifer meliloti).